Here is a 57-residue protein sequence, read N- to C-terminus: High-potential iron-sulfur protein (57 aa).

[4Fe-4S] cluster contacts are provided by Cys21, Cys24, Cys33, and Cys46.

It belongs to the high-potential iron-sulfur protein (HiPIP) family. As to quaternary structure, homodimer.

Its function is as follows. Specific class of high-redox-potential 4Fe-4S ferredoxins. Functions in anaerobic electron transport in most purple and in some other photosynthetic bacteria and in at least one genus (Paracoccus) of halophilic, denitrifying bacteria. The chain is High-potential iron-sulfur protein (hip) from Rhodopila globiformis (Rhodopseudomonas globiformis).